Consider the following 526-residue polypeptide: Bifunctional purine biosynthesis protein PurH (526 aa).

The region spanning 1 to 145 (MSKAPLALLS…KNHAHVGIVT (145 aa)) is the MGS-like domain.

Belongs to the PurH family.

The catalysed reaction is (6R)-10-formyltetrahydrofolate + 5-amino-1-(5-phospho-beta-D-ribosyl)imidazole-4-carboxamide = 5-formamido-1-(5-phospho-D-ribosyl)imidazole-4-carboxamide + (6S)-5,6,7,8-tetrahydrofolate. It catalyses the reaction IMP + H2O = 5-formamido-1-(5-phospho-D-ribosyl)imidazole-4-carboxamide. It participates in purine metabolism; IMP biosynthesis via de novo pathway; 5-formamido-1-(5-phospho-D-ribosyl)imidazole-4-carboxamide from 5-amino-1-(5-phospho-D-ribosyl)imidazole-4-carboxamide (10-formyl THF route): step 1/1. Its pathway is purine metabolism; IMP biosynthesis via de novo pathway; IMP from 5-formamido-1-(5-phospho-D-ribosyl)imidazole-4-carboxamide: step 1/1. In Psychrobacter cryohalolentis (strain ATCC BAA-1226 / DSM 17306 / VKM B-2378 / K5), this protein is Bifunctional purine biosynthesis protein PurH.